The sequence spans 185 residues: CASP-like protein 5A1 (185 aa).

Topologically, residues 1-45 (MNVSHPAVHPVGVPPALGGHAVPPRMRMRVRMEYLVFQGMPLPGT) are cytoplasmic. A helical membrane pass occupies residues 46–66 (LGGLVLRLGQFCSALIAFSVM). Over 67 to 76 (LSVRDFSVTA) the chain is Extracellular. The helical transmembrane segment at 77–97 (FCYLVAATVLQCLWSLAMAVI) threads the bilayer. The Cytoplasmic segment spans residues 98 to 121 (DVYALLVKRSLRNPLLVSIFVVGD). Residues 122–142 (GVTATLTFAAACASAGVIVLI) form a helical membrane-spanning segment. The Extracellular portion of the chain corresponds to 143-160 (GNDIAMCKDNPCANYEAA). A helical transmembrane segment spans residues 161-181 (IIMAFLSWFMVSISFILTFWL). Topologically, residues 182–185 (LATL) are cytoplasmic.

This sequence belongs to the Casparian strip membrane proteins (CASP) family. As to quaternary structure, homodimer and heterodimers.

The protein resides in the cell membrane. The polypeptide is CASP-like protein 5A1 (Picea sitchensis (Sitka spruce)).